A 143-amino-acid chain; its full sequence is NADH-quinone oxidoreductase subunit A (143 aa).

3 helical membrane-spanning segments follow: residues 8–28 (FGNVFVFLLLGVVFVAGGYLT), 63–83 (FYVVALIFIIFDVEVVFLFPW), and 93–113 (FALIEALVFAGILILGLVYAW).

The protein belongs to the complex I subunit 3 family. As to quaternary structure, NDH-1 is composed of 14 different subunits. Subunits NuoA, H, J, K, L, M, N constitute the membrane sector of the complex.

It is found in the cell inner membrane. The catalysed reaction is a quinone + NADH + 5 H(+)(in) = a quinol + NAD(+) + 4 H(+)(out). Functionally, NDH-1 shuttles electrons from NADH, via FMN and iron-sulfur (Fe-S) centers, to quinones in the respiratory chain. The immediate electron acceptor for the enzyme in this species is believed to be a menaquinone. Couples the redox reaction to proton translocation (for every two electrons transferred, four hydrogen ions are translocated across the cytoplasmic membrane), and thus conserves the redox energy in a proton gradient. The polypeptide is NADH-quinone oxidoreductase subunit A (Chlorobium luteolum (strain DSM 273 / BCRC 81028 / 2530) (Pelodictyon luteolum)).